A 377-amino-acid polypeptide reads, in one-letter code: Putative holocytochrome-c synthase (377 aa).

2 disordered regions span residues 1 to 29 (MTSS…SNEA) and 111 to 136 (QNSE…KPAG). Positions 7–22 (TTDHPRTGKCPIDHSK) are enriched in basic and acidic residues. 2 HRM repeats span residues 114–119 (EATPAV) and 124–129 (TCPMSN).

Belongs to the cytochrome c-type heme lyase family.

Its subcellular location is the mitochondrion inner membrane. It is found in the mitochondrion intermembrane space. It carries out the reaction holo-[cytochrome c] = apo-[cytochrome c] + heme b. Its function is as follows. Lyase that catalyzes the covalent linking of the heme group to the cytochrome C apoprotein to produce the mature functional cytochrome. The polypeptide is Putative holocytochrome-c synthase (Schizosaccharomyces pombe (strain 972 / ATCC 24843) (Fission yeast)).